Reading from the N-terminus, the 212-residue chain is 3-isopropylmalate dehydratase small subunit (212 aa).

Belongs to the LeuD family. LeuD type 1 subfamily. Heterodimer of LeuC and LeuD.

The catalysed reaction is (2R,3S)-3-isopropylmalate = (2S)-2-isopropylmalate. It functions in the pathway amino-acid biosynthesis; L-leucine biosynthesis; L-leucine from 3-methyl-2-oxobutanoate: step 2/4. Its function is as follows. Catalyzes the isomerization between 2-isopropylmalate and 3-isopropylmalate, via the formation of 2-isopropylmaleate. The chain is 3-isopropylmalate dehydratase small subunit from Methylococcus capsulatus (strain ATCC 33009 / NCIMB 11132 / Bath).